Here is a 353-residue protein sequence, read N- to C-terminus: MFKRFIFITLSLLVFACFKSNKKSIKSDKVVVGVLAHGSFYDKGYNQSVHDGVVKLRDNFGIKLITKSLRPYPIEGKRLLTVDEAMTEDAYEVQKNPLNLFWLIGYRFSDLSVKLSYERPDIYYGIIDAFDYGDIQVPKNSLAIKFRNEEAAFLAGYIAAKMSRKEKIGFLTGPMSEHVKDFKFGFKAGIFYANPKLRLVSKKAPSLFDKEKGKAMALFMYKEDKVGVIFPIAGITGLGVYDAAKELGPKYYVIGLNQDQSYIAPQNVITSIIKDIGKVIYSISSEYINNRVFKGGIIIDRGLKEGVIEIVKDPDVLNNRLVDEVIDLENKIISGEIIVPDSEYAFDLFKSKL.

A signal peptide spans 1 to 16 (MFKRFIFITLSLLVFA). Cysteine 17 carries N-palmitoyl cysteine lipidation. Cysteine 17 is lipidated: S-diacylglycerol cysteine.

This sequence belongs to the BMP lipoprotein family. In terms of assembly, monomer.

Its subcellular location is the cell inner membrane. Its function is as follows. May be part of an ABC-type nucleoside uptake system involved in the purine salvage pathway. The chain is Basic membrane protein C (bmpC) from Borreliella burgdorferi (strain ATCC 35210 / DSM 4680 / CIP 102532 / B31) (Borrelia burgdorferi).